The following is a 195-amino-acid chain: Transcriptional regulator GfcR (195 aa).

The protein belongs to the purine/pyrimidine phosphoribosyltransferase family. GfcR subfamily.

The protein is Transcriptional regulator GfcR of Picrophilus torridus (strain ATCC 700027 / DSM 9790 / JCM 10055 / NBRC 100828 / KAW 2/3).